A 428-amino-acid chain; its full sequence is Maltoporin 1 (428 aa).

A signal peptide spans 1 to 25 (MTMKVKLLTTSVALALSMTAFSSNA).

This sequence belongs to the porin LamB (TC 1.B.3) family. In terms of assembly, homotrimer formed of three 18-stranded antiparallel beta-barrels, containing three independent channels.

It is found in the cell outer membrane. The catalysed reaction is beta-maltose(in) = beta-maltose(out). Involved in the transport of maltose and maltodextrins. This is Maltoporin 1 from Aeromonas salmonicida (strain A449).